A 112-amino-acid polypeptide reads, in one-letter code: Divalent-cation tolerance protein CutA (112 aa).

Cys16, His83, and His84 together coordinate Cu cation.

Belongs to the CutA family. As to quaternary structure, homotrimer. Cu cation serves as cofactor.

It is found in the cytoplasm. In terms of biological role, involved in resistance toward heavy metals. This Escherichia coli O81 (strain ED1a) protein is Divalent-cation tolerance protein CutA.